A 224-amino-acid polypeptide reads, in one-letter code: MAEKEESVKLLGFWASPFSRRVEMALKLKGVPYEYLEEDLPNKTPLLLELNPLHKKVPVLVHNDKILLESHLILEYIDQTWKNSPILPQDPYEKAMARFWAKFIDDQILTLGFRSLVKAEKGREVAIEETRELLMFLEKEVTGKDFFGGKTIGFLDMIAGSMIPFCLARLWKGIGIDMIPEEKFPELNRWIKNLEEVEAVRGCIPPREKQIERMTKIAETIKSA.

A GST N-terminal domain is found at 6–85 (ESVKLLGFWA…YIDQTWKNSP (80 aa)). Glutathione is bound by residues 16–17 (SP), 42–43 (NK), 56–57 (KV), and 69–70 (ES). Residues 90 to 217 (DPYEKAMARF…EKQIERMTKI (128 aa)) enclose the GST C-terminal domain. Threonine 151 is modified (phosphothreonine).

It belongs to the GST superfamily. Tau family.

The protein localises to the cytoplasm. The protein resides in the cytosol. It carries out the reaction RX + glutathione = an S-substituted glutathione + a halide anion + H(+). Its function is as follows. May be involved in the conjugation of reduced glutathione to a wide number of exogenous and endogenous hydrophobic electrophiles and have a detoxification role against certain herbicides. The chain is Glutathione S-transferase U1 (GSTU1) from Arabidopsis thaliana (Mouse-ear cress).